Reading from the N-terminus, the 416-residue chain is Muscle-specific homeobox protein tinman (416 aa).

Composition is skewed to polar residues over residues 1 to 11 and 18 to 33; these read MLQHHQQQAQS and YTQSPSPGSLTNADAL. 3 disordered regions span residues 1–33, 246–305, and 391–416; these read MLQHHQQQAQSGGYYDHYTQSPSPGSLTNADAL, TASN…RKPR, and VMWPPTMQQSQQQQQHHAQQQQMQHM. Low complexity predominate over residues 281–295; the sequence is NSISGNSNPGSNSGS. Residues 301 to 360 constitute a DNA-binding region (homeobox); it reads KRKPRVLFSQAQVLELECRFRLKKYLTGAEREIIAQKLNLSATQVKIWFQNRRYKSKRGD. Low complexity predominate over residues 397-416; that stretch reads MQQSQQQQQHHAQQQQMQHM.

It is found in the nucleus. Required for the development of heart and visceral muscle; for the formation of somatic muscles. Has a crucial function in the early mesodermal subdivisions. The protein is Muscle-specific homeobox protein tinman (tin) of Drosophila melanogaster (Fruit fly).